A 187-amino-acid polypeptide reads, in one-letter code: Imidazoleglycerol-phosphate dehydratase (187 aa).

Belongs to the imidazoleglycerol-phosphate dehydratase family.

The protein localises to the cytoplasm. It carries out the reaction D-erythro-1-(imidazol-4-yl)glycerol 3-phosphate = 3-(imidazol-4-yl)-2-oxopropyl phosphate + H2O. The protein operates within amino-acid biosynthesis; L-histidine biosynthesis; L-histidine from 5-phospho-alpha-D-ribose 1-diphosphate: step 6/9. This chain is Imidazoleglycerol-phosphate dehydratase, found in Pyrobaculum calidifontis (strain DSM 21063 / JCM 11548 / VA1).